Reading from the N-terminus, the 215-residue chain is Ribose-5-phosphate isomerase A (215 aa).

Residues 26–29 (TGST), 79–82 (DGAD), and 92–95 (KGGG) each bind substrate. Glu-101 (proton acceptor) is an active-site residue. Residue Lys-119 coordinates substrate.

The protein belongs to the ribose 5-phosphate isomerase family. In terms of assembly, homodimer.

It catalyses the reaction aldehydo-D-ribose 5-phosphate = D-ribulose 5-phosphate. Its pathway is carbohydrate degradation; pentose phosphate pathway; D-ribose 5-phosphate from D-ribulose 5-phosphate (non-oxidative stage): step 1/1. In terms of biological role, catalyzes the reversible conversion of ribose-5-phosphate to ribulose 5-phosphate. In Xylella fastidiosa (strain 9a5c), this protein is Ribose-5-phosphate isomerase A.